The following is a 207-amino-acid chain: Large ribosomal subunit protein uL4 (207 aa).

Residues 44 to 76 are disordered; sequence KRRGTASAKTRSEVRGGGRKPWRQKGTGRARHG. The segment covering 60 to 76 has biased composition (basic residues); sequence GGRKPWRQKGTGRARHG.

This sequence belongs to the universal ribosomal protein uL4 family. As to quaternary structure, part of the 50S ribosomal subunit.

In terms of biological role, one of the primary rRNA binding proteins, this protein initially binds near the 5'-end of the 23S rRNA. It is important during the early stages of 50S assembly. It makes multiple contacts with different domains of the 23S rRNA in the assembled 50S subunit and ribosome. Its function is as follows. Forms part of the polypeptide exit tunnel. The polypeptide is Large ribosomal subunit protein uL4 (Natranaerobius thermophilus (strain ATCC BAA-1301 / DSM 18059 / JW/NM-WN-LF)).